The primary structure comprises 239 residues: MGRNDLIRRLPVYATGEHDCPYLDGETACTWFVDPDASLSPGLYSNLIRQGYRRSGRYIYRPGCDACHACQSLRIPVHRFRSRRRHRRCLKANAGATVEPLPSTYREEHYQLYCDYLQARHPGSEMSDPAIGDYLEFLRTDWCETLFYEFRDENDTLLGVAATDLVADGLSAVYTFYRPDLPERSLGTLAILWQINEARRLGLDYVYLGYWIKGCDQMRYKADFRPHEVFNGGRWLTVA.

It belongs to the R-transferase family. Bpt subfamily.

It localises to the cytoplasm. The enzyme catalyses N-terminal L-glutamyl-[protein] + L-leucyl-tRNA(Leu) = N-terminal L-leucyl-L-glutamyl-[protein] + tRNA(Leu) + H(+). It catalyses the reaction N-terminal L-aspartyl-[protein] + L-leucyl-tRNA(Leu) = N-terminal L-leucyl-L-aspartyl-[protein] + tRNA(Leu) + H(+). Its function is as follows. Functions in the N-end rule pathway of protein degradation where it conjugates Leu from its aminoacyl-tRNA to the N-termini of proteins containing an N-terminal aspartate or glutamate. In Alkalilimnicola ehrlichii (strain ATCC BAA-1101 / DSM 17681 / MLHE-1), this protein is Aspartate/glutamate leucyltransferase.